A 151-amino-acid polypeptide reads, in one-letter code: Small ribosomal subunit protein uS15 (151 aa).

It belongs to the universal ribosomal protein uS15 family.

This chain is Small ribosomal subunit protein uS15 (RPS13), found in Pisum sativum (Garden pea).